A 197-amino-acid polypeptide reads, in one-letter code: Recombination protein RecR (197 aa).

The C4-type zinc-finger motif lies at C55 to C70. In terms of domain architecture, Toprim spans Q78 to P173.

It belongs to the RecR family.

May play a role in DNA repair. It seems to be involved in an RecBC-independent recombinational process of DNA repair. It may act with RecF and RecO. The sequence is that of Recombination protein RecR from Xanthomonas campestris pv. campestris (strain 8004).